The primary structure comprises 218 residues: Dual specificity protein phosphatase TpbA (218 aa).

Positions 1 to 28 (MHRSPLAWLRLLLAAVLGAFLLGGPLHA) are cleaved as a signal peptide. A Tyrosine-protein phosphatase domain is found at 44 to 188 (DPSINLYRMS…YVRGADVDGL (145 aa)). The active-site Proton donor/acceptor is the aspartate 105. The Phosphocysteine intermediate role is filled by cysteine 132.

The protein belongs to the protein-tyrosine phosphatase family. Monomer in solution.

The protein resides in the periplasm. It catalyses the reaction O-phospho-L-tyrosyl-[protein] + H2O = L-tyrosyl-[protein] + phosphate. The catalysed reaction is O-phospho-L-threonyl-[protein] + H2O = L-threonyl-[protein] + phosphate. The enzyme catalyses O-phospho-L-seryl-[protein] + H2O = L-seryl-[protein] + phosphate. With respect to regulation, the phosphatase activity is completely inhibited by trisodium orthovanadate, a tyrosine phosphatase specific inhibitor. Phosphatase that regulates diverse phenotypes in P.aeruginosa via regulation of the concentration of cellular c-di-GMP. Acts by dephosphorylating the membrane-anchored diguanylate cyclase TpbB at tyrosine and serine/threonine sites, leading to inactivation of TpbB and reduced c-di-GMP production. The reduced cellular c-di-GMP concentration leads to reduced adhesin expression, reduced extracellular polysaccharide (EPS) production, pellicule production, cell aggregation and biofilm formation, and enhanced swimming and swarming. It affects colony morphology and controls rugose colony formation. TpbA also acts as a positive regulator of extracellular DNA (eDNA, a major component of the biofilm matrix) and cell lysis by reducing c-di-GMP concentrations. In vitro shows phosphatase activity toward p-nitrophenyl phosphate (pNPP), tyrosine phosphopeptides and a threonine phosphopeptide. Does not have phosphodiesterases (PDE) activity, and cannot degrade c-di-GMP. In Pseudomonas aeruginosa (strain UCBPP-PA14), this protein is Dual specificity protein phosphatase TpbA.